The chain runs to 136 residues: Acyl carrier protein 1, chloroplastic (136 aa).

The N-terminal 52 residues, 1-52 (MASVTGTSISMASFKASLAPSRVSNLRSVSLPIKGKSFAPLRMRSARFVVCC), are a transit peptide targeting the chloroplast. Positions 56-131 (PETVEKVCAI…DAADLIEKLI (76 aa)) constitute a Carrier domain. S91 carries the O-(pantetheine 4'-phosphoryl)serine modification.

It belongs to the acyl carrier protein (ACP) family. In terms of processing, 4'-phosphopantetheine is transferred from CoA to a specific serine of apo-ACP by acpS. This modification is essential for activity because fatty acids are bound in thioester linkage to the sulfhydryl of the prosthetic group.

Its subcellular location is the plastid. The protein resides in the chloroplast. It functions in the pathway lipid metabolism; fatty acid biosynthesis. Its function is as follows. Carrier of the growing fatty acid chain in fatty acid biosynthesis. The protein is Acyl carrier protein 1, chloroplastic (ACP1) of Casuarina glauca (Swamp oak).